The primary structure comprises 684 residues: Threonine--tRNA ligase (684 aa).

The 60-residue stretch at 1–60 (MSISITLHRSGTSRTQQVDTTTTGLDLFGSDRAVVAMRVDGNLVDLQRELHDGAEVEPVE) folds into the TGS domain. Positions 256-567 (DHRKLGAELD…LTEHYAGAFP (312 aa)) are catalytic. Zn(2+)-binding residues include cysteine 361, histidine 412, and histidine 544.

The protein belongs to the class-II aminoacyl-tRNA synthetase family. In terms of assembly, homodimer. Requires Zn(2+) as cofactor.

The protein localises to the cytoplasm. The enzyme catalyses tRNA(Thr) + L-threonine + ATP = L-threonyl-tRNA(Thr) + AMP + diphosphate + H(+). Functionally, catalyzes the attachment of threonine to tRNA(Thr) in a two-step reaction: L-threonine is first activated by ATP to form Thr-AMP and then transferred to the acceptor end of tRNA(Thr). Also edits incorrectly charged L-seryl-tRNA(Thr). This Cutibacterium acnes (strain DSM 16379 / KPA171202) (Propionibacterium acnes) protein is Threonine--tRNA ligase.